The chain runs to 308 residues: 15-cis-phytoene synthase (308 aa).

The protein belongs to the phytoene/squalene synthase family. The cofactor is ATP. Requires Mn(2+) as cofactor. It depends on Mg(2+) as a cofactor.

It catalyses the reaction 2 (2E,6E,10E)-geranylgeranyl diphosphate = 15-cis-phytoene + 2 diphosphate. The protein operates within carotenoid biosynthesis; phytoene biosynthesis. Functionally, involved in the biosynthesis of carotenoids. Catalyzes the condensation of two molecules of geranylgeranyl diphosphate (GGPP) to give prephytoene diphosphate (PPPP) and the subsequent rearrangement of the cyclopropylcarbinyl intermediate to yield 15-cis-phytoene. The polypeptide is 15-cis-phytoene synthase (crtB) (Synechococcus elongatus (strain ATCC 33912 / PCC 7942 / FACHB-805) (Anacystis nidulans R2)).